Consider the following 690-residue polypeptide: Methionine--tRNA ligase (690 aa).

A 'HIGH' region motif is present at residues 20 to 30 (PYANGSIHLGH). 4 residues coordinate Zn(2+): Cys151, Cys154, Cys164, and Cys167. Residues 337 to 341 (KMSKS) carry the 'KMSKS' region motif. Lys340 serves as a coordination point for ATP. The 102-residue stretch at 589–690 (DFAKVDLRIA…EGAQPGMRVM (102 aa)) folds into the tRNA-binding domain.

The protein belongs to the class-I aminoacyl-tRNA synthetase family. MetG type 1 subfamily. Homodimer. Zn(2+) is required as a cofactor.

Its subcellular location is the cytoplasm. It carries out the reaction tRNA(Met) + L-methionine + ATP = L-methionyl-tRNA(Met) + AMP + diphosphate. Functionally, is required not only for elongation of protein synthesis but also for the initiation of all mRNA translation through initiator tRNA(fMet) aminoacylation. The chain is Methionine--tRNA ligase from Vibrio vulnificus (strain YJ016).